We begin with the raw amino-acid sequence, 460 residues long: ATP synthase subunit beta (460 aa).

150-157 contributes to the ATP binding site; sequence GGAGVGKT.

The protein belongs to the ATPase alpha/beta chains family. As to quaternary structure, F-type ATPases have 2 components, CF(1) - the catalytic core - and CF(0) - the membrane proton channel. CF(1) has five subunits: alpha(3), beta(3), gamma(1), delta(1), epsilon(1). CF(0) has three main subunits: a(1), b(2) and c(9-12). The alpha and beta chains form an alternating ring which encloses part of the gamma chain. CF(1) is attached to CF(0) by a central stalk formed by the gamma and epsilon chains, while a peripheral stalk is formed by the delta and b chains.

Its subcellular location is the cell inner membrane. It carries out the reaction ATP + H2O + 4 H(+)(in) = ADP + phosphate + 5 H(+)(out). In terms of biological role, produces ATP from ADP in the presence of a proton gradient across the membrane. The catalytic sites are hosted primarily by the beta subunits. In Enterobacter sp. (strain 638), this protein is ATP synthase subunit beta.